The following is a 314-amino-acid chain: Small ribosomal subunit biogenesis GTPase RsgA (314 aa).

The interval 1–21 (MKRAPTKQPAKPAARGGERAQ) is disordered. One can recognise a CP-type G domain in the interval 85-246 (SDQFKSKLFA…LIDSPGFQEF (162 aa)). Residues 134 to 137 (NKID) and 188 to 196 (GQSGMGKST) contribute to the GTP site. Zn(2+) contacts are provided by Cys270, Cys275, His277, and Cys283.

This sequence belongs to the TRAFAC class YlqF/YawG GTPase family. RsgA subfamily. As to quaternary structure, monomer. Associates with 30S ribosomal subunit, binds 16S rRNA. Zn(2+) is required as a cofactor.

It localises to the cytoplasm. Its function is as follows. One of several proteins that assist in the late maturation steps of the functional core of the 30S ribosomal subunit. Helps release RbfA from mature subunits. May play a role in the assembly of ribosomal proteins into the subunit. Circularly permuted GTPase that catalyzes slow GTP hydrolysis, GTPase activity is stimulated by the 30S ribosomal subunit. In Burkholderia pseudomallei (strain 1710b), this protein is Small ribosomal subunit biogenesis GTPase RsgA.